We begin with the raw amino-acid sequence, 497 residues long: Putative glucuronosyltransferase PGSIP8 (497 aa).

A helical membrane pass occupies residues L3–A23. Mn(2+)-binding residues include D165 and D167. 5 consecutive transmembrane segments (helical) span residues Y319 to V339, G365 to I385, T388 to I408, L418 to W438, and G442 to V462.

The protein belongs to the glycosyltransferase 8 family. Glycogenin subfamily. Requires Mn(2+) as cofactor.

Its subcellular location is the membrane. In Arabidopsis thaliana (Mouse-ear cress), this protein is Putative glucuronosyltransferase PGSIP8 (PGSIP8).